The primary structure comprises 63 residues: Large ribosomal subunit protein uL29 (63 aa).

Belongs to the universal ribosomal protein uL29 family.

The sequence is that of Large ribosomal subunit protein uL29 from Photorhabdus laumondii subsp. laumondii (strain DSM 15139 / CIP 105565 / TT01) (Photorhabdus luminescens subsp. laumondii).